Reading from the N-terminus, the 82-residue chain is Penaeidin-3d (82 aa).

An N-terminal signal peptide occupies residues 1 to 19 (MRLVVCLVFLASFALVCQG). Pyrrolidone carboxylic acid is present on Q20. 3 cysteine pairs are disulfide-bonded: C51-C66, C55-C73, and C67-C74. Residue S81 is modified to Serine amide.

The protein belongs to the penaeidin family.

It is found in the cytoplasmic granule. In terms of biological role, antibacterial and antifungal activity. Presents chitin-binding activity. This Penaeus vannamei (Whiteleg shrimp) protein is Penaeidin-3d.